The following is a 171-amino-acid chain: uncharacterized protein (171 aa).

Disordered stretches follow at residues 68 to 124 (NKNN…ASQQ) and 140 to 171 (GDEDKGMDSTLKLPERTKRDSDDEDGMFSIKN). Positions 141–160 (DEDKGMDSTLKLPERTKRDS) are enriched in basic and acidic residues.

Belongs to the asfivirus H171R family.

The protein resides in the virion. This is an uncharacterized protein from Ornithodoros (relapsing fever ticks).